Reading from the N-terminus, the 1648-residue chain is Histone transcription regulator 3 (1648 aa).

2 disordered regions span residues asparagine 301–asparagine 371 and aspartate 1597–arginine 1630. Threonine 302 is modified (phosphothreonine). Serine 304 carries the phosphoserine modification. Residues glutamate 339–serine 353 are compositionally biased toward basic and acidic residues. Polar residues predominate over residues aspartate 1597 to glycine 1610. A compositionally biased stretch (low complexity) spans serine 1611–serine 1625.

Belongs to the HIR3 family. In terms of assembly, component of the HIR complex, composed of HIR1, HIR2, HIR3 and HPC2. This complex may consist of one copy of HIR1 and HIR3 and two copies of HIR2 and HPC2. The HIR complex interacts with ASF1. Interacts with RTT106.

It is found in the nucleus. The protein localises to the chromosome. Its function is as follows. HIR1, HIR2 and HIR3 are repressors of histone gene transcription. They are required for the periodic repression of three of the four histone gene loci during cell cycle as well as for autogenous regulation of the HTA1-HTB1 locus by H2A and H2B. Also has a role in nucleosome assembly. This chain is Histone transcription regulator 3 (HIR3), found in Saccharomyces cerevisiae (strain ATCC 204508 / S288c) (Baker's yeast).